The following is a 962-amino-acid chain: MLAQFLRSLFRFRKTTVSVLLVATYVVVFLLNVWDRIRYQYSLPEDNKHHKQLLDASWIDLQSITRKPHPYTSRENDAVHDFLLHRVTELVEGAPHAEVSDDYKEGNHLVFKQPDVFNSSSTESRIVSFESSNIVVKITGSQPELPGLLISAHFDSVPTALGATDDGVGIVTLLALITRYAKKQPRRTLVFNLNNNEEFGLLGASAFLNHRWRPLVDYVLNLEGTGAGGKAVLFRTSDTNTASIYKNAVKTQPFGNSIYQQAFYDRYISSETDYKVYEQAGLRGWDIAFYKPRALYHTIKDSTQFTSQASLWNMMHASLQLADFIAFESFEDEPKDRSPAVYFDIIGTFFVTASTKDLFTLNCVVLSVIPVIILVLEFVIQRRKTRERNPLLVWLRLPFSMFISYLVTATFRSSLFRVNPLIFSRDYVSPTIGFSFTFLILNYLVLSLLEYLAPSRDLKTVSFVELFFGMWIALLWATIRLCTSKYTATGVYPITVLYLLMSFGAIVGLVCSAFKRKHSVVKAKDSEETAAPNTYSSIEESPQQATNTEAPNENSPEEHDERAPLLRASNSSQVSSVTNVSEAPSSALKAFVVSALNYDWSVQFLAVVPLASFFVIMCLSLILDGIYQTCQEGFQATWNVSKISMLGGMLLAIPVLPFCYKLNYFVSMVLLFAAASAGIFSFERAPFTESSPLKLRFSQELNLHDELGFSTVNVFGRQGAGIEQILRNIPSTQNAHSNVECTSNGQGSETCRYAGPRPHLVSSSSIPELSDILSIKVLSNNRKSSGRSSYEPINAELVINVKENRLCTIGFNSSQFAEHDYGQSPVKQVTIFGNAHHDNRTRSQLSTLDGLSRDDEENRIFKWNRGINSLQLHKLDFERNYYHVGIQWMPTILSQDADEESSDALGLKIRCFWGEYDSVSIINGEVKRKVPALDELLAYSPKEVSFSNREAGLVIVNDYIEL.

Over 1–14 (MLAQFLRSLFRFRK) the chain is Cytoplasmic. The helical transmembrane segment at 15-35 (TTVSVLLVATYVVVFLLNVWD) threads the bilayer. The Vacuolar portion of the chain corresponds to 36–359 (RIRYQYSLPE…FVTASTKDLF (324 aa)). Asparagine 118 carries N-linked (GlcNAc...) asparagine glycosylation. The Zn(2+) site is built by histidine 153 and aspartate 165. Glutamate 197 serves as the catalytic Proton acceptor. Zn(2+) contacts are provided by glutamate 198, glutamate 223, and histidine 297. The helical transmembrane segment at 360-380 (TLNCVVLSVIPVIILVLEFVI) threads the bilayer. Topologically, residues 381–390 (QRRKTRERNP) are cytoplasmic. The helical transmembrane segment at 391–411 (LLVWLRLPFSMFISYLVTATF) threads the bilayer. Topologically, residues 412-431 (RSSLFRVNPLIFSRDYVSPT) are vacuolar. A helical transmembrane segment spans residues 432-452 (IGFSFTFLILNYLVLSLLEYL). The Cytoplasmic segment spans residues 453–460 (APSRDLKT). Residues 461–481 (VSFVELFFGMWIALLWATIRL) traverse the membrane as a helical segment. The Vacuolar portion of the chain corresponds to 482-489 (CTSKYTAT). The chain crosses the membrane as a helical span at residues 490–510 (GVYPITVLYLLMSFGAIVGLV). Topologically, residues 511–601 (CSAFKRKHSV…VVSALNYDWS (91 aa)) are cytoplasmic. Residues 531-554 (APNTYSSIEESPQQATNTEAPNEN) are compositionally biased toward polar residues. The interval 531–563 (APNTYSSIEESPQQATNTEAPNENSPEEHDERA) is disordered. The helical transmembrane segment at 602–622 (VQFLAVVPLASFFVIMCLSLI) threads the bilayer. Over 623–639 (LDGIYQTCQEGFQATWN) the chain is Vacuolar. A glycan (N-linked (GlcNAc...) asparagine) is linked at asparagine 639. The chain crosses the membrane as a helical span at residues 640 to 660 (VSKISMLGGMLLAIPVLPFCY). Position 661 (lysine 661) is a topological domain, cytoplasmic. A helical membrane pass occupies residues 662–682 (LNYFVSMVLLFAAASAGIFSF). Topologically, residues 683–962 (ERAPFTESSP…LVIVNDYIEL (280 aa)) are vacuolar. N-linked (GlcNAc...) asparagine glycans are attached at residues asparagine 812 and asparagine 839.

The protein belongs to the peptidase M28 family. The cofactor is Zn(2+).

It is found in the vacuole membrane. Functionally, may be involved in vacuolar sorting and osmoregulation. The polypeptide is Vacuolar membrane protease (Lachancea thermotolerans (strain ATCC 56472 / CBS 6340 / NRRL Y-8284) (Yeast)).